A 171-amino-acid chain; its full sequence is Small ribosomal subunit protein uS5 (171 aa).

An S5 DRBM domain is found at phenylalanine 13 to isoleucine 76.

Belongs to the universal ribosomal protein uS5 family. Part of the 30S ribosomal subunit. Contacts proteins S4 and S8.

Its function is as follows. With S4 and S12 plays an important role in translational accuracy. Functionally, located at the back of the 30S subunit body where it stabilizes the conformation of the head with respect to the body. In Dichelobacter nodosus (strain VCS1703A), this protein is Small ribosomal subunit protein uS5.